We begin with the raw amino-acid sequence, 327 residues long: Glycoprotein integral membrane protein 1 (327 aa).

The first 23 residues, Met-1–Gly-23, serve as a signal peptide directing secretion. The Extracellular portion of the chain corresponds to Trp-24–Pro-259. 3 N-linked (GlcNAc...) asparagine glycosylation sites follow: Asn-44, Asn-62, and Asn-146. The helical transmembrane segment at Val-260–Ala-280 threads the bilayer. Residues Val-281–Ile-327 lie on the Cytoplasmic side of the membrane.

Its subcellular location is the membrane. The chain is Glycoprotein integral membrane protein 1 (Ginm1) from Mus musculus (Mouse).